The chain runs to 242 residues: MRSGVIAQKIGMTRVYNETGEHIPVTVLRMENCQVVAQRTEEKNGYTAVQLGVGLAKVKNTSKALRGHFAAASVEPKAKVAEFRVSPENLLDVGAEITADHFVPGQKVDVTGTSIGKGFQGVMKRHNFGGGRATHGNSVSHRTHGSTGQRQDPGKVFKGKKMAGHMGDRRVTTQNLEVVSTDTERGLILVRGAVPGSKGSWIMVRDAVKAPLPKEAPLPAAIRASNNNAEKAAATAAGEGAE.

The interval 131–165 (GRATHGNSVSHRTHGSTGQRQDPGKVFKGKKMAGH) is disordered. Over residues 135 to 150 (HGNSVSHRTHGSTGQR) the composition is skewed to polar residues. Q151 bears the N5-methylglutamine mark.

This sequence belongs to the universal ribosomal protein uL3 family. In terms of assembly, part of the 50S ribosomal subunit. Forms a cluster with proteins L14 and L19. Methylated by PrmB.

Functionally, one of the primary rRNA binding proteins, it binds directly near the 3'-end of the 23S rRNA, where it nucleates assembly of the 50S subunit. The polypeptide is Large ribosomal subunit protein uL3 (Chelativorans sp. (strain BNC1)).